We begin with the raw amino-acid sequence, 969 residues long: Leucine--tRNA ligase (969 aa).

The disordered stretch occupies residues 1–23 (MTESPTTSPATGSGAAAPDSDAP). The 'HIGH' region signature appears at 78–89 (PYPSGEGLHVGH). A 'KMSKS' region motif is present at residues 737–741 (KIGKS). ATP is bound at residue Lys-740.

This sequence belongs to the class-I aminoacyl-tRNA synthetase family.

Its subcellular location is the cytoplasm. It catalyses the reaction tRNA(Leu) + L-leucine + ATP = L-leucyl-tRNA(Leu) + AMP + diphosphate. The polypeptide is Leucine--tRNA ligase (Mycolicibacterium paratuberculosis (strain ATCC BAA-968 / K-10) (Mycobacterium paratuberculosis)).